The chain runs to 523 residues: Solute carrier family 35 member F5 (523 aa).

Transmembrane regions (helical) follow at residues 69–89 (MALG…SSEL) and 101–121 (FFST…FIIW). S207 carries the post-translational modification Phosphoserine. Helical transmembrane passes span 243-263 (ISFF…EALS), 268-288 (AIVN…AAVF), 296-316 (FTLS…LVNL), 327-347 (TIGS…IVMI), 361-381 (MFFG…FFLL), 395-415 (VVLM…EFLW), 420-440 (FLTS…LSII), and 452-472 (WLFF…TLLC). Positions 252–316 (FLANLSYQEA…SIGGVVLVNL (65 aa)) constitute an EamA domain.

The protein belongs to the SLC35F solute transporter family.

The protein localises to the membrane. In terms of biological role, putative solute transporter. The sequence is that of Solute carrier family 35 member F5 (SLC35F5) from Pongo abelii (Sumatran orangutan).